The chain runs to 834 residues: DNA-directed RNA polymerase subunit beta' (834 aa).

Residues Cys-88, Cys-90, Cys-104, and Cys-107 each coordinate Zn(2+). Asp-641, Asp-643, and Asp-645 together coordinate Mg(2+).

The protein belongs to the RNA polymerase beta' chain family. RpoC1 subfamily. As to quaternary structure, in plastids the minimal PEP RNA polymerase catalytic core is composed of four subunits: alpha, beta, beta', and beta''. When a (nuclear-encoded) sigma factor is associated with the core the holoenzyme is formed, which can initiate transcription. The cofactor is Mg(2+). It depends on Zn(2+) as a cofactor.

It localises to the plastid. The enzyme catalyses RNA(n) + a ribonucleoside 5'-triphosphate = RNA(n+1) + diphosphate. Functionally, DNA-dependent RNA polymerase catalyzes the transcription of DNA into RNA using the four ribonucleoside triphosphates as substrates. This is DNA-directed RNA polymerase subunit beta' (rpoC1) from Helicosporidium sp. subsp. Simulium jonesii (Green alga).